The following is a 251-amino-acid chain: Probable ATP-dependent transporter ycf16 (251 aa).

The region spanning 8-250 (LEIKNLKACI…ELESKGYEWL (243 aa)) is the ABC transporter domain. Residue 40–47 (GPNGSGKS) participates in ATP binding.

The protein belongs to the ABC transporter superfamily. Ycf16 family.

The protein resides in the plastid. The protein localises to the chloroplast. The chain is Probable ATP-dependent transporter ycf16 (ycf16) from Trieres chinensis (Marine centric diatom).